We begin with the raw amino-acid sequence, 637 residues long: Threonine--tRNA ligase (637 aa).

The region spanning 1-61 (MITITLPDSS…ATDAAVRLIT (61 aa)) is the TGS domain. The catalytic stretch occupies residues 238-528 (DHRKLGAELD…LIEHFAGKFP (291 aa)). Residues cysteine 329, histidine 380, and histidine 505 each coordinate Zn(2+).

This sequence belongs to the class-II aminoacyl-tRNA synthetase family. Homodimer. Requires Zn(2+) as cofactor.

Its subcellular location is the cytoplasm. It catalyses the reaction tRNA(Thr) + L-threonine + ATP = L-threonyl-tRNA(Thr) + AMP + diphosphate + H(+). Functionally, catalyzes the attachment of threonine to tRNA(Thr) in a two-step reaction: L-threonine is first activated by ATP to form Thr-AMP and then transferred to the acceptor end of tRNA(Thr). Also edits incorrectly charged L-seryl-tRNA(Thr). In Desulfosudis oleivorans (strain DSM 6200 / JCM 39069 / Hxd3) (Desulfococcus oleovorans), this protein is Threonine--tRNA ligase.